A 1760-amino-acid polypeptide reads, in one-letter code: Chitin synthase A (1760 aa).

A glycan (N-linked (GlcNAc...) asparagine) is linked at asparagine 157. The next 2 membrane-spanning stretches (helical) occupy residues 729 to 749 (IWTG…LRFV) and 765 to 785 (LVLV…IIAF). N-linked (GlcNAc...) asparagine glycosylation is found at asparagine 876 and asparagine 996. A helical transmembrane segment spans residues 1027–1047 (ILLAFTCLICAVILVKFLAAL). An N-linked (GlcNAc...) asparagine glycan is attached at asparagine 1392. The next 3 membrane-spanning stretches (helical) occupy residues 1417-1437 (FVVL…VYLG), 1449-1469 (IPII…IIFI), and 1477-1497 (IGWM…LPMY). Residues asparagine 1557, asparagine 1645, and asparagine 1650 are each glycosylated (N-linked (GlcNAc...) asparagine). The disordered stretch occupies residues 1670-1691 (DNLLGVPRPNSRSPVGGYTSRP). In terms of domain architecture, DEK-C spans 1702–1758 (GPDEMAITDAIRSCLAEVDLDTVTKKQVRALVEQRLQATLTGDKRAFLDRQIDQELA).

Belongs to the chitin synthase family. Class V subfamily.

It is found in the cell membrane. It catalyses the reaction [(1-&gt;4)-N-acetyl-beta-D-glucosaminyl](n) + UDP-N-acetyl-alpha-D-glucosamine = [(1-&gt;4)-N-acetyl-beta-D-glucosaminyl](n+1) + UDP + H(+). Its function is as follows. Polymerizes chitin, a structural polymer of the cell wall and septum, by transferring the sugar moiety of UDP-GlcNAc to the non-reducing end of the growing chitin polymer. Plays an important role in cell-wall formation during both hyphal growth and conidiation. This chain is Chitin synthase A, found in Aspergillus oryzae (strain ATCC 42149 / RIB 40) (Yellow koji mold).